The chain runs to 306 residues: Dermonecrotic toxin LiSicTox-alphaIA2ai (306 aa).

Residues 1-18 (MLPYIALILVCWSVLSQA) form the signal peptide. Residues 19–26 (AQTDVEGR) constitute a propeptide that is removed on maturation. H38 is an active-site residue. Positions 58 and 60 each coordinate Mg(2+). The Nucleophile role is filled by H74. 2 disulfide bridges follow: C78-C84 and C80-C223. A Mg(2+)-binding site is contributed by D118. N-linked (GlcNAc...) asparagine glycosylation occurs at N283.

Belongs to the arthropod phospholipase D family. Class II subfamily. Class IIa sub-subfamily. The cofactor is Mg(2+). In terms of tissue distribution, expressed by the venom gland.

The protein resides in the secreted. It catalyses the reaction an N-(acyl)-sphingosylphosphocholine = an N-(acyl)-sphingosyl-1,3-cyclic phosphate + choline. The catalysed reaction is an N-(acyl)-sphingosylphosphoethanolamine = an N-(acyl)-sphingosyl-1,3-cyclic phosphate + ethanolamine. It carries out the reaction a 1-acyl-sn-glycero-3-phosphocholine = a 1-acyl-sn-glycero-2,3-cyclic phosphate + choline. The enzyme catalyses a 1-acyl-sn-glycero-3-phosphoethanolamine = a 1-acyl-sn-glycero-2,3-cyclic phosphate + ethanolamine. In terms of biological role, dermonecrotic toxins cleave the phosphodiester linkage between the phosphate and headgroup of certain phospholipids (sphingolipid and lysolipid substrates), forming an alcohol (often choline) and a cyclic phosphate. This toxin acts on sphingomyelin (SM). It may also act on ceramide phosphoethanolamine (CPE), lysophosphatidylcholine (LPC) and lysophosphatidylethanolamine (LPE), but not on lysophosphatidylserine (LPS), and lysophosphatidylglycerol (LPG). It acts by transphosphatidylation, releasing exclusively cyclic phosphate products as second products. It induces complement-dependent hemolysis, dermonecrosis, vascular permeability and platelet aggregation. In Loxosceles intermedia (Brown spider), this protein is Dermonecrotic toxin LiSicTox-alphaIA2ai.